The chain runs to 512 residues: Glutamyl-tRNA(Gln) amidotransferase subunit A (512 aa).

Active-site charge relay system residues include Lys82 and Ser157. Ser181 serves as the catalytic Acyl-ester intermediate.

It belongs to the amidase family. GatA subfamily. In terms of assembly, heterotrimer of A, B and C subunits.

The catalysed reaction is L-glutamyl-tRNA(Gln) + L-glutamine + ATP + H2O = L-glutaminyl-tRNA(Gln) + L-glutamate + ADP + phosphate + H(+). Functionally, allows the formation of correctly charged Gln-tRNA(Gln) through the transamidation of misacylated Glu-tRNA(Gln) in organisms which lack glutaminyl-tRNA synthetase. The reaction takes place in the presence of glutamine and ATP through an activated gamma-phospho-Glu-tRNA(Gln). The protein is Glutamyl-tRNA(Gln) amidotransferase subunit A of Bordetella pertussis (strain Tohama I / ATCC BAA-589 / NCTC 13251).